Consider the following 534-residue polypeptide: Endoglucanase 5 (534 aa).

The signal sequence occupies residues 1–27 (MSDVSGRFVVAAAVVAVSLAMAAAAAA). Catalysis depends on aspartate 82, which acts as the Nucleophile. Active-site residues include histidine 432, aspartate 484, and glutamate 493. The tract at residues 515–534 (RRRGEDAPPSSTSPVAEDDL) is disordered.

Belongs to the glycosyl hydrolase 9 (cellulase E) family.

It localises to the secreted. It catalyses the reaction Endohydrolysis of (1-&gt;4)-beta-D-glucosidic linkages in cellulose, lichenin and cereal beta-D-glucans.. This is Endoglucanase 5 from Oryza sativa subsp. japonica (Rice).